The primary structure comprises 178 residues: Large ribosomal subunit protein uL6 (178 aa).

It belongs to the universal ribosomal protein uL6 family. Part of the 50S ribosomal subunit.

Functionally, this protein binds to the 23S rRNA, and is important in its secondary structure. It is located near the subunit interface in the base of the L7/L12 stalk, and near the tRNA binding site of the peptidyltransferase center. The sequence is that of Large ribosomal subunit protein uL6 from Helicobacter acinonychis (strain Sheeba).